A 346-amino-acid chain; its full sequence is NADH-quinone oxidoreductase subunit H 2 (346 aa).

A run of 8 helical transmembrane segments spans residues Ile-14 to Ala-34, Phe-83 to Ile-103, Val-136 to Gly-156, Ser-172 to Leu-192, Gly-208 to Ala-228, Phe-260 to Leu-280, Leu-289 to Ile-309, and Leu-324 to Val-344.

Belongs to the complex I subunit 1 family. As to quaternary structure, NDH-1 is composed of 14 different subunits. Subunits NuoA, H, J, K, L, M, N constitute the membrane sector of the complex.

Its subcellular location is the cell inner membrane. It catalyses the reaction a quinone + NADH + 5 H(+)(in) = a quinol + NAD(+) + 4 H(+)(out). Functionally, NDH-1 shuttles electrons from NADH, via FMN and iron-sulfur (Fe-S) centers, to quinones in the respiratory chain. The immediate electron acceptor for the enzyme in this species is believed to be ubiquinone. Couples the redox reaction to proton translocation (for every two electrons transferred, four hydrogen ions are translocated across the cytoplasmic membrane), and thus conserves the redox energy in a proton gradient. This subunit may bind ubiquinone. The protein is NADH-quinone oxidoreductase subunit H 2 of Geobacter metallireducens (strain ATCC 53774 / DSM 7210 / GS-15).